The chain runs to 443 residues: tRNA-2-methylthio-N(6)-dimethylallyladenosine synthase (443 aa).

The 118-residue stretch at 3-120 folds into the MTTase N-terminal domain; sequence SKLYIKTFGC…LPELIDARRR (118 aa). 6 residues coordinate [4Fe-4S] cluster: Cys-12, Cys-49, Cys-83, Cys-157, Cys-161, and Cys-164. The Radical SAM core domain occupies 143-377; that stretch reads RTTGATAFVS…KIQRNAQMIS (235 aa). The region spanning 378–441 is the TRAM domain; it reads QSMVDTIQRV…SHTLRGEISD (64 aa).

The protein belongs to the methylthiotransferase family. MiaB subfamily. As to quaternary structure, monomer. [4Fe-4S] cluster serves as cofactor.

Its subcellular location is the cytoplasm. It catalyses the reaction N(6)-dimethylallyladenosine(37) in tRNA + (sulfur carrier)-SH + AH2 + 2 S-adenosyl-L-methionine = 2-methylsulfanyl-N(6)-dimethylallyladenosine(37) in tRNA + (sulfur carrier)-H + 5'-deoxyadenosine + L-methionine + A + S-adenosyl-L-homocysteine + 2 H(+). In terms of biological role, catalyzes the methylthiolation of N6-(dimethylallyl)adenosine (i(6)A), leading to the formation of 2-methylthio-N6-(dimethylallyl)adenosine (ms(2)i(6)A) at position 37 in tRNAs that read codons beginning with uridine. This Nitrosomonas eutropha (strain DSM 101675 / C91 / Nm57) protein is tRNA-2-methylthio-N(6)-dimethylallyladenosine synthase.